Consider the following 356-residue polypeptide: Guanine nucleotide-binding protein alpha-15 subunit (356 aa).

A lipid anchor (N-myristoyl glycine) is attached at Gly2. The S-palmitoyl cysteine moiety is linked to residue Cys5. Residues 33 to 356 (GNQKLLLLGT…GRNLRGTGME (324 aa)) form the G-alpha domain. Residues 36–49 (KLLLLGTGECGKST) are G1 motif. GTP contacts are provided by residues 41–48 (GTGECGKS), 177–183 (LRIRIPT), 202–206 (DVGGQ), 271–274 (NKRD), and Ala328. Ser48 and Thr183 together coordinate Mg(2+). Residues 175-183 (DMLRIRIPT) form a G2 motif region. The tract at residues 198–207 (FRIYDVGGQR) is G3 motif. Residues 267–274 (ILFLNKRD) form a G4 motif region. Residues 326–331 (TCATDT) are G5 motif.

This sequence belongs to the G-alpha family. G proteins are composed of 3 units; alpha, beta and gamma. The alpha chain contains the guanine nucleotide binding site.

Guanine nucleotide-binding proteins (G proteins) are involved as modulators or transducers in various transmembrane signaling systems. The sequence is that of Guanine nucleotide-binding protein alpha-15 subunit (gpa-15) from Caenorhabditis elegans.